A 371-amino-acid polypeptide reads, in one-letter code: 4-hydroxy-3-methylbut-2-en-1-yl diphosphate synthase (flavodoxin) (371 aa).

[4Fe-4S] cluster is bound by residues Cys270, Cys273, Cys305, and Glu312.

Belongs to the IspG family. The cofactor is [4Fe-4S] cluster.

The enzyme catalyses (2E)-4-hydroxy-3-methylbut-2-enyl diphosphate + oxidized [flavodoxin] + H2O + 2 H(+) = 2-C-methyl-D-erythritol 2,4-cyclic diphosphate + reduced [flavodoxin]. The protein operates within isoprenoid biosynthesis; isopentenyl diphosphate biosynthesis via DXP pathway; isopentenyl diphosphate from 1-deoxy-D-xylulose 5-phosphate: step 5/6. In terms of biological role, converts 2C-methyl-D-erythritol 2,4-cyclodiphosphate (ME-2,4cPP) into 1-hydroxy-2-methyl-2-(E)-butenyl 4-diphosphate. The protein is 4-hydroxy-3-methylbut-2-en-1-yl diphosphate synthase (flavodoxin) of Shewanella pealeana (strain ATCC 700345 / ANG-SQ1).